A 117-amino-acid chain; its full sequence is Large ribosomal subunit protein uL18 (117 aa).

It belongs to the universal ribosomal protein uL18 family. In terms of assembly, part of the 50S ribosomal subunit; part of the 5S rRNA/L5/L18/L25 subcomplex. Contacts the 5S and 23S rRNAs.

This is one of the proteins that bind and probably mediate the attachment of the 5S RNA into the large ribosomal subunit, where it forms part of the central protuberance. In Aliivibrio fischeri (strain MJ11) (Vibrio fischeri), this protein is Large ribosomal subunit protein uL18.